The sequence spans 353 residues: Photosystem II D2 protein (353 aa).

N-acetylthreonine is present on Thr-2. At Thr-2 the chain carries Phosphothreonine. A helical membrane pass occupies residues 41-61 (CAYFALGGWFTGTTFVTSWYT). His-118 contacts chlorophyll a. The chain crosses the membrane as a helical span at residues 125–141 (GFMLRQFELARSVQLRP). Residues Gln-130 and Asn-143 each coordinate pheophytin a. Residues 153 to 166 (VFVSVFLIYPLGQS) form a helical membrane-spanning segment. His-198 contacts chlorophyll a. Residues 208-228 (AALLCAIHGATVENTLFEDGD) form a helical membrane-spanning segment. Positions 215 and 262 each coordinate a plastoquinone. His-215 lines the Fe cation pocket. Residue His-269 coordinates Fe cation. The chain crosses the membrane as a helical span at residues 279-295 (GLWMSALGVVGLALNLR).

This sequence belongs to the reaction center PufL/M/PsbA/D family. In terms of assembly, PSII is composed of 1 copy each of membrane proteins PsbA, PsbB, PsbC, PsbD, PsbE, PsbF, PsbH, PsbI, PsbJ, PsbK, PsbL, PsbM, PsbT, PsbX, PsbY, PsbZ, Psb30/Ycf12, at least 3 peripheral proteins of the oxygen-evolving complex and a large number of cofactors. It forms dimeric complexes. The D1/D2 heterodimer binds P680, chlorophylls that are the primary electron donor of PSII, and subsequent electron acceptors. It shares a non-heme iron and each subunit binds pheophytin, quinone, additional chlorophylls, carotenoids and lipids. There is also a Cl(-1) ion associated with D1 and D2, which is required for oxygen evolution. The PSII complex binds additional chlorophylls, carotenoids and specific lipids. serves as cofactor.

The protein localises to the plastid. The protein resides in the chloroplast thylakoid membrane. The enzyme catalyses 2 a plastoquinone + 4 hnu + 2 H2O = 2 a plastoquinol + O2. Its function is as follows. Photosystem II (PSII) is a light-driven water:plastoquinone oxidoreductase that uses light energy to abstract electrons from H(2)O, generating O(2) and a proton gradient subsequently used for ATP formation. It consists of a core antenna complex that captures photons, and an electron transfer chain that converts photonic excitation into a charge separation. The D1/D2 (PsbA/PsbD) reaction center heterodimer binds P680, the primary electron donor of PSII as well as several subsequent electron acceptors. D2 is needed for assembly of a stable PSII complex. The protein is Photosystem II D2 protein of Ceratophyllum demersum (Rigid hornwort).